The chain runs to 114 residues: Large ribosomal subunit protein bL20c (114 aa).

This sequence belongs to the bacterial ribosomal protein bL20 family.

The protein localises to the plastid. Binds directly to 23S ribosomal RNA and is necessary for the in vitro assembly process of the 50S ribosomal subunit. It is not involved in the protein synthesizing functions of that subunit. This is Large ribosomal subunit protein bL20c from Prototheca wickerhamii.